A 494-amino-acid polypeptide reads, in one-letter code: BUB3-interacting and GLEBS motif-containing protein ZNF207 (494 aa).

A microtubule-binding region region spans residues 1–92; it reads MGRKKKKQLK…EGIPEKDMDE (92 aa). 2 consecutive C2H2-type zinc fingers follow at residues 11 to 34 and 35 to 58; these read PWCWYCNRDFDDEKILTQHQKAKH and FKCHICHKKLYTGPGLAIHCMQVH. Positions 100–111 are enriched in basic and acidic residues; it reads KTQESQKKKQQD. 3 disordered regions span residues 100–161, 250–377, and 455–494; these read KTQE…PGIP, NRPP…SATS, and LPGAMPPYGQGPPMVPPYQGGPPRPPMGMRPPVMSQGGRY. A compositionally biased stretch (acidic residues) spans 112–121; the sequence is DSDEYDDDDS. Over residues 127–136 the composition is skewed to polar residues; that stretch reads FQPQPVQPQQ. Residues 142 to 161 show a composition bias toward pro residues; that stretch reads MAQPGLPPVPGAPGMPPGIP. The span at 283-300 shows a compositional bias: low complexity; the sequence is SSSTASSNSESLSASSKA. Residues 323-332 show a composition bias toward polar residues; sequence LNSTPATSTE. Low complexity predominate over residues 342–377; that stretch reads TQSTASTTSTTNSTAAKPAASITSKPATLTTTSATS. The segment at 375 to 407 is GLEBS; that stretch reads ATSKLIHPDEDISLEERRAQLPKYQRNLPRPGQ. Positions 463–483 are enriched in pro residues; that stretch reads GQGPPMVPPYQGGPPRPPMGM.

In terms of assembly, interacts (via GLEBS region) with BUB3.

Its subcellular location is the nucleus. It localises to the chromosome. It is found in the centromere. The protein localises to the kinetochore. The protein resides in the cytoplasm. Its subcellular location is the cytoskeleton. It localises to the spindle. Its function is as follows. Kinetochore- and microtubule-binding protein that plays a key role in spindle assembly. ZNF207/BuGZ is mainly composed of disordered low-complexity regions and undergoes phase transition or coacervation to form temperature-dependent liquid droplets. Coacervation promotes microtubule bundling and concentrates tubulin, promoting microtubule polymerization and assembly of spindle and spindle matrix by concentrating its building blocks. Also acts as a regulator of mitotic chromosome alignment by mediating the stability and kinetochore loading of BUB3. Mechanisms by which BUB3 is protected are unclear: according to a first report, ZNF207/BuGZ may act by blocking ubiquitination and proteasomal degradation of BUB3. According to another report, the stabilization is independent of the proteasome. The protein is BUB3-interacting and GLEBS motif-containing protein ZNF207 of Pongo abelii (Sumatran orangutan).